The primary structure comprises 399 residues: Dual-specificity RNA methyltransferase RlmN (399 aa).

The active-site Proton acceptor is the glutamate 122. Residues 128–371 (ETDRGTLCVS…VRTPRGRDIL (244 aa)) form the Radical SAM core domain. Cysteine 135 and cysteine 374 form a disulfide bridge. Cysteine 142, cysteine 146, and cysteine 149 together coordinate [4Fe-4S] cluster. S-adenosyl-L-methionine-binding positions include 200-201 (GE), serine 232, 254-256 (SLH), and asparagine 331. Catalysis depends on cysteine 374, which acts as the S-methylcysteine intermediate.

The protein belongs to the radical SAM superfamily. RlmN family. The cofactor is [4Fe-4S] cluster.

The protein resides in the cytoplasm. It catalyses the reaction adenosine(2503) in 23S rRNA + 2 reduced [2Fe-2S]-[ferredoxin] + 2 S-adenosyl-L-methionine = 2-methyladenosine(2503) in 23S rRNA + 5'-deoxyadenosine + L-methionine + 2 oxidized [2Fe-2S]-[ferredoxin] + S-adenosyl-L-homocysteine. The enzyme catalyses adenosine(37) in tRNA + 2 reduced [2Fe-2S]-[ferredoxin] + 2 S-adenosyl-L-methionine = 2-methyladenosine(37) in tRNA + 5'-deoxyadenosine + L-methionine + 2 oxidized [2Fe-2S]-[ferredoxin] + S-adenosyl-L-homocysteine. Functionally, specifically methylates position 2 of adenine 2503 in 23S rRNA and position 2 of adenine 37 in tRNAs. m2A2503 modification seems to play a crucial role in the proofreading step occurring at the peptidyl transferase center and thus would serve to optimize ribosomal fidelity. This is Dual-specificity RNA methyltransferase RlmN from Rhodopseudomonas palustris (strain HaA2).